The primary structure comprises 72 residues: Long neurotoxin OH-5 (72 aa).

5 cysteine pairs are disulfide-bonded: C3–C22, C15–C43, C28–C32, C47–C58, and C59–C64.

The protein belongs to the three-finger toxin family. Long-chain subfamily. Type II alpha-neurotoxin sub-subfamily. As to expression, expressed by the venom gland.

It localises to the secreted. Binds with high affinity to muscular (alpha-1/CHRNA1) and neuronal (alpha-7/CHRNA7) nicotinic acetylcholine receptor (nAChR) and inhibits acetylcholine from binding to the receptor, thereby impairing neuromuscular and neuronal transmission. The sequence is that of Long neurotoxin OH-5 from Ophiophagus hannah (King cobra).